A 159-amino-acid polypeptide reads, in one-letter code: SsrA-binding protein (159 aa).

This sequence belongs to the SmpB family.

The protein localises to the cytoplasm. Functionally, required for rescue of stalled ribosomes mediated by trans-translation. Binds to transfer-messenger RNA (tmRNA), required for stable association of tmRNA with ribosomes. tmRNA and SmpB together mimic tRNA shape, replacing the anticodon stem-loop with SmpB. tmRNA is encoded by the ssrA gene; the 2 termini fold to resemble tRNA(Ala) and it encodes a 'tag peptide', a short internal open reading frame. During trans-translation Ala-aminoacylated tmRNA acts like a tRNA, entering the A-site of stalled ribosomes, displacing the stalled mRNA. The ribosome then switches to translate the ORF on the tmRNA; the nascent peptide is terminated with the 'tag peptide' encoded by the tmRNA and targeted for degradation. The ribosome is freed to recommence translation, which seems to be the essential function of trans-translation. The protein is SsrA-binding protein of Bifidobacterium adolescentis (strain ATCC 15703 / DSM 20083 / NCTC 11814 / E194a).